The following is a 476-amino-acid chain: Cysteine--tRNA ligase (476 aa).

Residue cysteine 29 participates in Zn(2+) binding. A 'HIGH' region motif is present at residues 31-41; that stretch reads PTVYDYPHLGH. Zn(2+) is bound by residues cysteine 209, histidine 234, and glutamate 238. The 'KMSKS' region motif lies at 266 to 270; sequence KMSKS. An ATP-binding site is contributed by lysine 269.

The protein belongs to the class-I aminoacyl-tRNA synthetase family. Zn(2+) serves as cofactor.

It is found in the cytoplasm. The catalysed reaction is tRNA(Cys) + L-cysteine + ATP = L-cysteinyl-tRNA(Cys) + AMP + diphosphate. The sequence is that of Cysteine--tRNA ligase from Thermococcus gammatolerans (strain DSM 15229 / JCM 11827 / EJ3).